The following is a 264-amino-acid chain: Hydroxyethylthiazole kinase (264 aa).

Met40 contributes to the substrate binding site. Lys116 and Thr161 together coordinate ATP. Gly188 serves as a coordination point for substrate.

It belongs to the Thz kinase family. Requires Mg(2+) as cofactor.

The catalysed reaction is 5-(2-hydroxyethyl)-4-methylthiazole + ATP = 4-methyl-5-(2-phosphooxyethyl)-thiazole + ADP + H(+). The protein operates within cofactor biosynthesis; thiamine diphosphate biosynthesis; 4-methyl-5-(2-phosphoethyl)-thiazole from 5-(2-hydroxyethyl)-4-methylthiazole: step 1/1. Its function is as follows. Catalyzes the phosphorylation of the hydroxyl group of 4-methyl-5-beta-hydroxyethylthiazole (THZ). The sequence is that of Hydroxyethylthiazole kinase from Staphylococcus carnosus (strain TM300).